Consider the following 648-residue polypeptide: Solute carrier family 23 member 2 (648 aa).

Positions 1-21 are disordered; it reads MMGIGKNTASKSVEAGGSTEG. Residues 9–110 lie on the Cytoplasmic side of the membrane; the sequence is ASKSVEAGGS…LCIFLGLQHY (102 aa). S70 is subject to Phosphoserine. Residue T75 is modified to Phosphothreonine. S78 bears the Phosphoserine mark. At T79 the chain carries Phosphothreonine. S81 bears the Phosphoserine mark. Residues 111 to 131 form a helical membrane-spanning segment; the sequence is LTCFSGTIAVPFLLADAMCVG. Over 132–139 the chain is Extracellular; that stretch reads DDQWATSQ. Residues 140–160 form a helical membrane-spanning segment; that stretch reads LIGTIFFCVGITTLLQTTFGC. A topological domain (cytoplasmic) is located at residue R161. The helical transmembrane segment at 162–182 threads the bilayer; it reads LPLFQASAFAFLAPARAILSL. Topologically, residues 183-216 are extracellular; it reads DKWKCNTTEITVANGTAELLEHIWHPRIQEIQGA. N-linked (GlcNAc...) asparagine glycans are attached at residues N188 and N196. The helical transmembrane segment at 217 to 237 threads the bilayer; that stretch reads IIMSSLIEVVIGLLGLPGALL. At 238–264 the chain is on the cytoplasmic side; it reads RYIGPLTITPTVALIGLSGFQAAGERA. The helical transmembrane segment at 265–282 threads the bilayer; that stretch reads GKHWGIAMLTIFLVLLFS. Over 283–286 the chain is Extracellular; sequence QYAR. Residues 287–300 constitute an intramembrane region (helical); the sequence is NVKFPLPIYKSKKG. Residues 301 to 307 lie on the Extracellular side of the membrane; sequence WTAYKFQ. The helical transmembrane segment at 308–328 threads the bilayer; sequence LFKMFPIILAILVSWLLCFIF. Residues 329-369 are Cytoplasmic-facing; the sequence is TVTDVFPSNSTDYGYYARTDARKGVLLVAPWFKVPYPFQWG. The helical transmembrane segment at 370–390 threads the bilayer; the sequence is MPTVSAAGVIGMLSAVVASII. The Extracellular portion of the chain corresponds to 391–415; that stretch reads ESIGDYYACARLSCAPPPPIHAINR. Residues 416–436 traverse the membrane as a helical segment; it reads GIFVEGLSCVLDGIFGTGNGS. The Cytoplasmic portion of the chain corresponds to 437–459; sequence TSSSPNIGVLGITKVGSRRVIQY. The helical transmembrane segment at 460–480 threads the bilayer; that stretch reads GAALMLGLGMVGKFSALFASL. Residues 481–483 are Extracellular-facing; sequence PDP. The helical transmembrane segment at 484–504 threads the bilayer; the sequence is VLGALFCTLFGMITAVGLSNL. At 505–514 the chain is on the cytoplasmic side; sequence QFIDLNSSRN. A helical membrane pass occupies residues 515-535; that stretch reads LFVLGFSIFFGLVLPSYLRQN. Residues 536–545 are Extracellular-facing; it reads PLVTGITGID. A helical membrane pass occupies residues 546–566; sequence QILNVLLTTAMFVGGCVAFIL. Over 567–648 the chain is Cytoplasmic; sequence DNTIPGTPEE…SSDKDSQATV (82 aa). Phosphothreonine is present on T647.

The protein belongs to the nucleobase:cation symporter-2 (NCS2) (TC 2.A.40) family. As to quaternary structure, interacts with CLSTN3. Post-translationally, phosphorylated. Expressed in metabolically active and specialized tissues, including high expression in brain and adrenals. Detected in a wide range of tissues. Expression in kidney is almost undetectable.

The protein localises to the cell membrane. It catalyses the reaction L-ascorbate(out) + 2 Na(+)(out) = L-ascorbate(in) + 2 Na(+)(in). Sodium/ascorbate cotransporter. Mediates electrogenic uptake of vitamin C, with a stoichiometry of 2 Na(+) for each ascorbate. The chain is Solute carrier family 23 member 2 (Slc23a2) from Mus musculus (Mouse).